The chain runs to 225 residues: Ureidoacrylate amidohydrolase RutB (225 aa).

D22 (proton acceptor) is an active-site residue. Residue K131 is part of the active site. C164 functions as the Nucleophile in the catalytic mechanism.

The protein belongs to the isochorismatase family. RutB subfamily.

It catalyses the reaction (Z)-3-ureidoacrylate + H2O + H(+) = (Z)-3-aminoacrylate + NH4(+) + CO2. The enzyme catalyses (Z)-3-ureidoacrylate + H2O = (Z)-3-aminoacrylate + carbamate + H(+). The catalysed reaction is (Z)-2-methylureidoacrylate + H2O + H(+) = (Z)-2-methylaminoacrylate + NH4(+) + CO2. Functionally, hydrolyzes ureidoacrylate to form aminoacrylate and carbamate. The carbamate hydrolyzes spontaneously, thereby releasing one of the nitrogen atoms of the pyrimidine ring as ammonia and one of its carbon atoms as CO2. This Caulobacter vibrioides (strain ATCC 19089 / CIP 103742 / CB 15) (Caulobacter crescentus) protein is Ureidoacrylate amidohydrolase RutB.